The following is a 392-amino-acid chain: HCLS1-binding protein 3 (392 aa).

Met1 is subject to N-acetylmethionine. Residues Ser3, Ser139, and Ser194 each carry the phosphoserine modification. Residues 19–142 (GLDLTVPQHQ…EFLGTRSPGA (124 aa)) enclose the PX domain. 3 disordered regions span residues 138–162 (RSPG…QTGN), 174–265 (DQVA…PLKL), and 319–364 (GAEP…KPQE). The segment covering 190–201 (DAEESLEEEEAL) has biased composition (acidic residues). Residues 208–220 (RSKKPKKHPKVAV) show a composition bias toward basic residues. Phosphoserine is present on Ser249. Residues 325 to 335 (KPQLKPKPPVA) are compositionally biased toward pro residues. Lys337 carries the N6-acetyllysine modification.

In terms of assembly, binds HCLS1. Interacts with the SH3 domain of HCLS1 in vitro.

Functionally, may be a modulator of IL-2 signaling. The sequence is that of HCLS1-binding protein 3 (HS1BP3) from Homo sapiens (Human).